The following is a 205-amino-acid chain: MTEFKSAPAYQEAKYLTSAAEFDQLPPDQGAEIAFIGRSNAGKSSALNIITGIKGLARTSKTPGRTQMINFFALNEHERLVDLPGYGYAKVPRMVQKRWEELVDSYLKNRRCLKGLVVVMDIRHPLKEMDEDVIEWAVNYDIPIHILLTKSDKLSQNAAKKTLGEVQTAISAYGEKLTLQLFSSHDRTGLDEVKAVLSQWFRSEP.

Residues 29–203 (QGAEIAFIGR…KAVLSQWFRS (175 aa)) enclose the EngB-type G domain. GTP contacts are provided by residues 37–44 (GRSNAGKS), 64–68 (GRTQM), 82–85 (DLPG), 149–152 (TKSD), and 182–184 (FSS). Residues serine 44 and threonine 66 each contribute to the Mg(2+) site.

Belongs to the TRAFAC class TrmE-Era-EngA-EngB-Septin-like GTPase superfamily. EngB GTPase family. Mg(2+) serves as cofactor.

In terms of biological role, necessary for normal cell division and for the maintenance of normal septation. This Coxiella burnetii (strain RSA 493 / Nine Mile phase I) protein is Probable GTP-binding protein EngB.